The chain runs to 430 residues: Adenylosuccinate synthetase (430 aa).

GTP contacts are provided by residues 12 to 18 (GDEGKGK) and 40 to 42 (GHT). Aspartate 13 functions as the Proton acceptor in the catalytic mechanism. Residues aspartate 13 and glycine 40 each coordinate Mg(2+). Residues 13–16 (DEGK), 38–41 (NAGH), threonine 129, arginine 143, glutamine 224, threonine 239, and arginine 303 contribute to the IMP site. The active-site Proton donor is histidine 41. Position 299–305 (299–305 (TVSNRER)) interacts with substrate. GTP is bound by residues arginine 305, 331-333 (KLD), and 413-415 (STG).

This sequence belongs to the adenylosuccinate synthetase family. As to quaternary structure, homodimer. The cofactor is Mg(2+).

Its subcellular location is the cytoplasm. The enzyme catalyses IMP + L-aspartate + GTP = N(6)-(1,2-dicarboxyethyl)-AMP + GDP + phosphate + 2 H(+). It functions in the pathway purine metabolism; AMP biosynthesis via de novo pathway; AMP from IMP: step 1/2. Plays an important role in the de novo pathway of purine nucleotide biosynthesis. Catalyzes the first committed step in the biosynthesis of AMP from IMP. This is Adenylosuccinate synthetase from Ehrlichia ruminantium (strain Gardel).